A 326-amino-acid polypeptide reads, in one-letter code: Biotin synthase (326 aa).

The 230-residue stretch at 48 to 277 (FGAGKVDLCS…SARIRMAGGR (230 aa)) folds into the Radical SAM core domain. The [4Fe-4S] cluster site is built by Cys-66, Cys-70, and Cys-73. Positions 110, 142, 202, and 272 each coordinate [2Fe-2S] cluster.

It belongs to the radical SAM superfamily. Biotin synthase family. As to quaternary structure, homodimer. It depends on [4Fe-4S] cluster as a cofactor. Requires [2Fe-2S] cluster as cofactor.

The enzyme catalyses (4R,5S)-dethiobiotin + (sulfur carrier)-SH + 2 reduced [2Fe-2S]-[ferredoxin] + 2 S-adenosyl-L-methionine = (sulfur carrier)-H + biotin + 2 5'-deoxyadenosine + 2 L-methionine + 2 oxidized [2Fe-2S]-[ferredoxin]. It participates in cofactor biosynthesis; biotin biosynthesis; biotin from 7,8-diaminononanoate: step 2/2. Catalyzes the conversion of dethiobiotin (DTB) to biotin by the insertion of a sulfur atom into dethiobiotin via a radical-based mechanism. The protein is Biotin synthase of Heliobacterium modesticaldum (strain ATCC 51547 / Ice1).